Here is a 131-residue protein sequence, read N- to C-terminus: Thioredoxin H4-1 (131 aa).

The 127-residue stretch at 3-129 (SCVGKERSDE…LEKKVAALAD (127 aa)) folds into the Thioredoxin domain. Catalysis depends on nucleophile residues C55 and C58. A disulfide bridge connects residues C55 and C58.

Belongs to the thioredoxin family. Plant H-type subfamily.

The protein localises to the cytoplasm. Probable thiol-disulfide oxidoreductase that may be involved in the redox regulation of a number of cytosolic enzymes. This is Thioredoxin H4-1 from Oryza sativa subsp. japonica (Rice).